The chain runs to 148 residues: SsrA-binding protein (148 aa).

The disordered stretch occupies residues 119–148 (AKGKKQHDKRQSMKEADWKREKQRLIKHTR). Residues 127 to 142 (KRQSMKEADWKREKQR) are compositionally biased toward basic and acidic residues.

The protein belongs to the SmpB family.

It localises to the cytoplasm. In terms of biological role, required for rescue of stalled ribosomes mediated by trans-translation. Binds to transfer-messenger RNA (tmRNA), required for stable association of tmRNA with ribosomes. tmRNA and SmpB together mimic tRNA shape, replacing the anticodon stem-loop with SmpB. tmRNA is encoded by the ssrA gene; the 2 termini fold to resemble tRNA(Ala) and it encodes a 'tag peptide', a short internal open reading frame. During trans-translation Ala-aminoacylated tmRNA acts like a tRNA, entering the A-site of stalled ribosomes, displacing the stalled mRNA. The ribosome then switches to translate the ORF on the tmRNA; the nascent peptide is terminated with the 'tag peptide' encoded by the tmRNA and targeted for degradation. The ribosome is freed to recommence translation, which seems to be the essential function of trans-translation. The polypeptide is SsrA-binding protein (Neisseria meningitidis serogroup C (strain 053442)).